The primary structure comprises 602 residues: UvrABC system protein C (602 aa).

The GIY-YIG domain occupies 15-100 (DQSGVYHYFD…IKQLKPKYNI (86 aa)). The UVR domain occupies 206-241 (SKLISRLKERMEKLAENLRFEEAGELRDRIEKIKRI).

Belongs to the UvrC family. Interacts with UvrB in an incision complex.

It is found in the cytoplasm. The UvrABC repair system catalyzes the recognition and processing of DNA lesions. UvrC both incises the 5' and 3' sides of the lesion. The N-terminal half is responsible for the 3' incision and the C-terminal half is responsible for the 5' incision. The protein is UvrABC system protein C of Wolinella succinogenes (strain ATCC 29543 / DSM 1740 / CCUG 13145 / JCM 31913 / LMG 7466 / NCTC 11488 / FDC 602W) (Vibrio succinogenes).